The sequence spans 494 residues: Glycerol kinase (494 aa).

Position 13 (threonine 13) interacts with ADP. Threonine 13, threonine 14, and serine 15 together coordinate ATP. Threonine 13 serves as a coordination point for sn-glycerol 3-phosphate. Arginine 17 lines the ADP pocket. Arginine 83, glutamate 84, tyrosine 135, and aspartate 244 together coordinate sn-glycerol 3-phosphate. Residues arginine 83, glutamate 84, tyrosine 135, aspartate 244, and glutamine 245 each contribute to the glycerol site. ADP is bound by residues threonine 266 and glycine 309. Positions 266, 309, 313, and 410 each coordinate ATP. 2 residues coordinate ADP: glycine 410 and asparagine 414.

The protein belongs to the FGGY kinase family.

The enzyme catalyses glycerol + ATP = sn-glycerol 3-phosphate + ADP + H(+). It functions in the pathway polyol metabolism; glycerol degradation via glycerol kinase pathway; sn-glycerol 3-phosphate from glycerol: step 1/1. Its activity is regulated as follows. Inhibited by fructose 1,6-bisphosphate (FBP). In terms of biological role, key enzyme in the regulation of glycerol uptake and metabolism. Catalyzes the phosphorylation of glycerol to yield sn-glycerol 3-phosphate. The polypeptide is Glycerol kinase (Shewanella baltica (strain OS223)).